A 492-amino-acid polypeptide reads, in one-letter code: Protein PAIR1 (492 aa).

Positions 166-186 (VDSVQSDVMQLNRAMKEASLD) form a coiled coil. Positions 479–483 (KRRRR) match the Nuclear localization signal motif.

In terms of assembly, interacts with CRC1. In terms of tissue distribution, expressed in reproductive organs, but not in vegetative organs.

The protein localises to the nucleus. In terms of biological role, involved in spore formation. Plays an essential role in the establishment of homologous chromosome pairing in early meiosis. This chain is Protein PAIR1 (PAIR1), found in Oryza sativa subsp. japonica (Rice).